Consider the following 331-residue polypeptide: Peroxisomal nicotinamide adenine dinucleotide carrier (331 aa).

3 Solcar repeats span residues 2–91, 109–216, and 229–320; these read SDAL…FRNR, VGMF…MLTK, and VTAL…LVKG. A run of 6 helical transmembrane segments spans residues 5-25, 63-85, 116-136, 180-200, 235-255, and 293-313; these read LING…TYPL, LYGG…YYFY, LVAA…WVIV, VYDE…LIMV, FLLG…LLVV, and YKGM…LFMI.

Belongs to the mitochondrial carrier (TC 2.A.29) family. As to quaternary structure, homodimer. Expressed in cotyledons, hypocotyls, vascular tissues, trichomes, hydathodes, seeds, pedicels, flowers and stigma.

It localises to the glyoxysome membrane. Its activity is regulated as follows. Inhibited by pyridoxal 5'-phosphate, bathophenanthroline, tannic acid, mersalyl, mercuric chloride and bromocresol purple. Mediates the NAD(+) import into peroxisomes. Favors the NAD(+)(in)/AMP(out) antiport exchange, but is also able to catalyze a low unidirectional transport that might be essential under special conditions. Transports CoA, dephospho-CoA, acetyl-CoA, adenosine 3',5'-diphosphate (PAP), NAD(+), AMP, ADP and NADH, but has no activity with ATP, GTP, GDP, NADPH, NADP(+) or FAD. Required for peroxisomes proliferation. This is Peroxisomal nicotinamide adenine dinucleotide carrier (PXN) from Arabidopsis thaliana (Mouse-ear cress).